A 208-amino-acid polypeptide reads, in one-letter code: ATP-dependent Clp protease proteolytic subunit (208 aa).

Catalysis depends on S105, which acts as the Nucleophile. H130 is a catalytic residue.

It belongs to the peptidase S14 family. In terms of assembly, fourteen ClpP subunits assemble into 2 heptameric rings which stack back to back to give a disk-like structure with a central cavity, resembling the structure of eukaryotic proteasomes.

The protein localises to the cytoplasm. It carries out the reaction Hydrolysis of proteins to small peptides in the presence of ATP and magnesium. alpha-casein is the usual test substrate. In the absence of ATP, only oligopeptides shorter than five residues are hydrolyzed (such as succinyl-Leu-Tyr-|-NHMec, and Leu-Tyr-Leu-|-Tyr-Trp, in which cleavage of the -Tyr-|-Leu- and -Tyr-|-Trp bonds also occurs).. Functionally, cleaves peptides in various proteins in a process that requires ATP hydrolysis. Has a chymotrypsin-like activity. Plays a major role in the degradation of misfolded proteins. The protein is ATP-dependent Clp protease proteolytic subunit of Xylella fastidiosa (strain M12).